We begin with the raw amino-acid sequence, 76 residues long: UPF0248 protein MmarC5_1387 (76 aa).

It belongs to the UPF0248 family.

This Methanococcus maripaludis (strain C5 / ATCC BAA-1333) protein is UPF0248 protein MmarC5_1387.